The primary structure comprises 296 residues: 5,10-methylenetetrahydrofolate reductase (296 aa).

Glutamate 28 functions as the Proton donor/acceptor in the catalytic mechanism. Threonine 59 is a binding site for NADH. Tyrosine 60, alanine 62, histidine 88, arginine 118, glycine 119, aspartate 120, alanine 132, tyrosine 152, histidine 156, alanine 159, aspartate 165, asparagine 168, arginine 171, and lysine 172 together coordinate FAD. Aspartate 120 contacts (6S)-5-methyl-5,6,7,8-tetrahydrofolate. Glutamine 183 contributes to the NADH binding site. Residues glutamine 183, glutamine 219, and arginine 279 each coordinate (6S)-5-methyl-5,6,7,8-tetrahydrofolate.

The protein belongs to the methylenetetrahydrofolate reductase family. Homotetramer. The cofactor is FAD.

It catalyses the reaction (6S)-5-methyl-5,6,7,8-tetrahydrofolate + NAD(+) = (6R)-5,10-methylene-5,6,7,8-tetrahydrofolate + NADH + H(+). It participates in one-carbon metabolism; tetrahydrofolate interconversion. Its pathway is amino-acid biosynthesis; L-methionine biosynthesis via de novo pathway. Functionally, catalyzes the NADH-dependent reduction of 5,10-methylenetetrahydrofolate to 5-methyltetrahydrofolate. Is required to provide the methyl group necessary for methionine synthetase to convert homocysteine to methionine; the methyl group is given by 5-methyltetrahydrofolate. Can also use NADPH as the reductant, but much less effectively than NADH. The protein is 5,10-methylenetetrahydrofolate reductase of Escherichia coli (strain K12).